Here is a 144-residue protein sequence, read N- to C-terminus: Grifin (144 aa).

One can recognise a Galectin domain in the interval 5–133; the sequence is SKAFCAGGLA…DHCLAQVELA (129 aa). Serine 138 bears the Phosphoserine mark.

Homodimer. As to expression, not detected in lens.

The chain is Grifin (GRIFIN) from Homo sapiens (Human).